The primary structure comprises 364 residues: Methylthioribose-1-phosphate isomerase (364 aa).

Residues 53–55 (RGA), Arg-90, and Gln-203 each bind substrate. Asp-244 functions as the Proton donor in the catalytic mechanism. 254-255 (NK) lines the substrate pocket.

This sequence belongs to the eIF-2B alpha/beta/delta subunits family. MtnA subfamily.

It catalyses the reaction 5-(methylsulfanyl)-alpha-D-ribose 1-phosphate = 5-(methylsulfanyl)-D-ribulose 1-phosphate. It functions in the pathway amino-acid biosynthesis; L-methionine biosynthesis via salvage pathway; L-methionine from S-methyl-5-thio-alpha-D-ribose 1-phosphate: step 1/6. Its function is as follows. Catalyzes the interconversion of methylthioribose-1-phosphate (MTR-1-P) into methylthioribulose-1-phosphate (MTRu-1-P). This Sinorhizobium medicae (strain WSM419) (Ensifer medicae) protein is Methylthioribose-1-phosphate isomerase.